The following is a 203-amino-acid chain: Outer-membrane lipoprotein LolB (203 aa).

The N-terminal stretch at 1–18 is a signal peptide; it reads MYRLLCLLALLTAAGLMG. Cysteine 19 carries the N-palmitoyl cysteine lipid modification. The S-diacylglycerol cysteine moiety is linked to residue cysteine 19.

It belongs to the LolB family. In terms of assembly, monomer.

Its subcellular location is the cell outer membrane. Functionally, plays a critical role in the incorporation of lipoproteins in the outer membrane after they are released by the LolA protein. This Cellvibrio japonicus (strain Ueda107) (Pseudomonas fluorescens subsp. cellulosa) protein is Outer-membrane lipoprotein LolB.